We begin with the raw amino-acid sequence, 951 residues long: Metal transporter CNNM1 (951 aa).

Residues 23-43 (AVLLLFFSLSPRPPAAAAWLL) traverse the membrane as a helical segment. The interval 114–138 (GAGGAAPSAVPTRPPGPQRCREQSD) is disordered. The CNNM transmembrane domain occupies 218–414 (LLPPAWLRAL…DPYSDLVKEE (197 aa)). 3 helical membrane passes run 222–242 (AWLR…FSGL), 282–302 (LLCT…GWLY), and 319–339 (AGVH…FLGA). 2 CBS domains span residues 433–495 (LTPL…CTPL) and 502–568 (YNRP…ILDE). Polar residues-rich tracts occupy residues 731–740 (SRCSGLNRSE) and 814–824 (KAPTTRGTPQT). 2 disordered regions span residues 731-754 (SRCS…GSNT) and 795-830 (MDSS…DDPV). Phosphothreonine is present on residues Thr821 and Thr824. The residue at position 850 (Ser850) is a Phosphoserine. Residues 903–951 (DPEASPCSSDSEENMGKKLLRTLSGRKRKKSADGERASEENSNLTPLIT) are disordered. Positions 920 to 932 (KLLRTLSGRKRKK) are enriched in basic residues. Residues 942 to 951 (ENSNLTPLIT) are compositionally biased toward polar residues.

This sequence belongs to the ACDP family. In terms of tissue distribution, predominantly expressed in brain and testis, and, at lower levels, in kidney. In the brain, expressed in hippocampal neurons (at protein level).

It localises to the cell membrane. Functionally, probable metal transporter. This is Metal transporter CNNM1 (Cnnm1) from Mus musculus (Mouse).